Reading from the N-terminus, the 584-residue chain is Glutathione hydrolase proenzyme (584 aa).

The signal sequence occupies residues 1-25 (MAPAAMNLLCTVLYLLSSFAQVSDA). A glycan (N-linked (GlcNAc...) asparagine) is linked at asparagine 111. Arginine 120 provides a ligand contact to L-glutamate. N-linked (GlcNAc...) asparagine glycans are attached at residues asparagine 135, asparagine 262, asparagine 272, asparagine 350, and asparagine 370. Threonine 395 functions as the Nucleophile in the catalytic mechanism. Residues threonine 413, glutamate 434, and 465–466 (SS) each bind L-glutamate. An N-linked (GlcNAc...) asparagine glycan is attached at asparagine 547.

The protein belongs to the gamma-glutamyltransferase family. As to quaternary structure, heterodimer composed of the light and heavy chains. The active site is located in the light chain. Cleaved by autocatalysis into a large and a small subunit and the autocatalytic cleavage is essential to the functional activation of the enzyme.

It localises to the secreted. The catalysed reaction is an N-terminal (5-L-glutamyl)-[peptide] + an alpha-amino acid = 5-L-glutamyl amino acid + an N-terminal L-alpha-aminoacyl-[peptide]. It catalyses the reaction glutathione + H2O = L-cysteinylglycine + L-glutamate. It carries out the reaction an S-substituted glutathione + H2O = an S-substituted L-cysteinylglycine + L-glutamate. The enzyme catalyses leukotriene C4 + H2O = leukotriene D4 + L-glutamate. Its pathway is sulfur metabolism; glutathione metabolism. Cleaves the gamma-glutamyl bond of extracellular glutathione (gamma-Glu-Cys-Gly), glutathione conjugates, and other gamma-glutamyl compounds. The metabolism of glutathione releases free glutamate and the dipeptide cysteinyl-glycine, which is hydrolyzed to cysteine and glycine by dipeptidases. In the presence of high concentrations of dipeptides and some amino acids, can also catalyze a transpeptidation reaction, transferring the gamma-glutamyl moiety to an acceptor amino acid to form a new gamma-glutamyl compound. Initiates extracellular glutathione (GSH) breakdown, provides cells with a local cysteine supply and contributes to maintain intracellular GSH level. It is part of the cell antioxidant defense mechanism. The chain is Glutathione hydrolase proenzyme from Arthroderma benhamiae (strain ATCC MYA-4681 / CBS 112371) (Trichophyton mentagrophytes).